A 167-amino-acid polypeptide reads, in one-letter code: MANGEQTGADGLREKLITINRVAKVVQGGRQFGFTALTVVGDGEGRVGFGYGKAREVPAAIQKAMERARGGMRTVPLDGPTLRYPVTHFHGSSKVFMKPASPGTGIIAGGAMRAVFEVLGVQDVLAKSVGSRNPINVVRATVDGLASMDSPEAVAARRGKSVEEITG.

Residues 12–75 form the S5 DRBM domain; that stretch reads LREKLITINR…ERARGGMRTV (64 aa).

Belongs to the universal ribosomal protein uS5 family. In terms of assembly, part of the 30S ribosomal subunit. Contacts proteins S4 and S8.

Functionally, with S4 and S12 plays an important role in translational accuracy. In terms of biological role, located at the back of the 30S subunit body where it stabilizes the conformation of the head with respect to the body. This is Small ribosomal subunit protein uS5 from Halorhodospira halophila (strain DSM 244 / SL1) (Ectothiorhodospira halophila (strain DSM 244 / SL1)).